The primary structure comprises 203 residues: Outer-membrane lipoprotein LolB (203 aa).

The N-terminal stretch at 1–17 (MNRLFRLLPLASLVLTA) is a signal peptide. C18 is lipidated: N-palmitoyl cysteine. The S-diacylglycerol cysteine moiety is linked to residue C18.

It belongs to the LolB family. In terms of assembly, monomer.

It localises to the cell outer membrane. Plays a critical role in the incorporation of lipoproteins in the outer membrane after they are released by the LolA protein. The sequence is that of Outer-membrane lipoprotein LolB from Klebsiella pneumoniae subsp. pneumoniae (strain ATCC 700721 / MGH 78578).